The following is a 424-amino-acid chain: Serine--tRNA ligase (424 aa).

232 to 234 is a binding site for L-serine; that stretch reads TAE. 263-265 contributes to the ATP binding site; it reads RRE. L-serine is bound at residue glutamate 286. 350 to 353 contacts ATP; that stretch reads EISS. Serine 384 contributes to the L-serine binding site.

The protein belongs to the class-II aminoacyl-tRNA synthetase family. Type-1 seryl-tRNA synthetase subfamily. Homodimer. The tRNA molecule binds across the dimer.

Its subcellular location is the cytoplasm. The catalysed reaction is tRNA(Ser) + L-serine + ATP = L-seryl-tRNA(Ser) + AMP + diphosphate + H(+). It catalyses the reaction tRNA(Sec) + L-serine + ATP = L-seryl-tRNA(Sec) + AMP + diphosphate + H(+). It participates in aminoacyl-tRNA biosynthesis; selenocysteinyl-tRNA(Sec) biosynthesis; L-seryl-tRNA(Sec) from L-serine and tRNA(Sec): step 1/1. Catalyzes the attachment of serine to tRNA(Ser). Is also able to aminoacylate tRNA(Sec) with serine, to form the misacylated tRNA L-seryl-tRNA(Sec), which will be further converted into selenocysteinyl-tRNA(Sec). This chain is Serine--tRNA ligase, found in Prochlorococcus marinus subsp. pastoris (strain CCMP1986 / NIES-2087 / MED4).